The primary structure comprises 168 residues: Histone doublet miniH2B-H2A (168 aa).

Its subcellular location is the host nucleus. The protein resides in the host cytoplasm. It localises to the virion. Functionally, histone-like protein that is recruited to viral factories during viral replication and participates in viral DNA packaging and virion production probably by forming unstable nucleosome-like particles. May compact the viral DNA. The chain is Histone doublet miniH2B-H2A from Melbournevirus (MelV).